A 206-amino-acid polypeptide reads, in one-letter code: Ras-related protein ralB-B (206 aa).

21–28 contributes to the GTP binding site; it reads GSGGVGKS. The short motif at 43-51 is the Effector region element; the sequence is YEPTKADSY. Residues 68-72 and 128-131 each bind GTP; these read DTAGQ and NKSD. The span at 180-189 shows a compositional bias: basic and acidic residues; sequence KMSENKDKNG. The tract at residues 180–206 is disordered; sequence KMSENKDKNGKKSGKSKKGFKQRCCLL. Basic residues predominate over residues 190-200; the sequence is KKSGKSKKGFK. Cys-203 carries the post-translational modification Cysteine methyl ester. Cys-203 carries the S-geranylgeranyl cysteine lipid modification. Positions 204–206 are cleaved as a propeptide — removed in mature form; sequence CLL.

The protein belongs to the small GTPase superfamily. Ras family. As to quaternary structure, interacts with ralbp1 and rap1gds1.

Its subcellular location is the cell membrane. The protein resides in the midbody. The enzyme catalyses GTP + H2O = GDP + phosphate + H(+). In terms of biological role, multifunctional GTPase involved in a variety of cellular processes including gene expression, cell migration, cell proliferation, oncogenic transformation and membrane trafficking. Accomplishes its multiple functions by interacting with distinct downstream effectors. Acts as a GTP sensor for GTP-dependent exocytosis of dense core vesicles. Required both to stabilize the assembly of the exocyst complex and to localize functional exocyst complexes to the leading edge of migrating cells. Required for suppression of apoptosis. In late stages of cytokinesis, upon completion of the bridge formation between dividing cells, mediates exocyst recruitment to the midbody to drive abscission. Regulates the actin cytoskeleton to play a role in gastrulation or neurulation. During the cleavage stages, the GTP-bound form induces a cortical reaction that affects the localization of pigment granules. Activated by the FGF pathway via ras and ral-GDS, but independently of raf. Directs ralbp1 to the plasma membrane. Involved in ligand-dependent receptor mediated endocytosis of the EGF and insulin receptors. This is Ras-related protein ralB-B (ralb-b) from Xenopus laevis (African clawed frog).